Here is a 337-residue protein sequence, read N- to C-terminus: MVREKVTVSTRTLQWKCVESRADSKRLYYGRFILSPLIKGQADTIGIAMRRALLGEIEGTCITRAKSEKIPHEYSTIVGIEESVHEILMNLKEIVLRSNLYGTRNASICIRGPGYVTAQDIISPPSVETVDNTQHIANLTEPIDFCIELEIERNRGYRMKTPNNSQDGSYPIDAVFMPVRNANHSIHSYANGNEKQEILFLEIWTNGSLTPKEALHEASRNLIDLFIPFLHAQEENILLEDNQNGVTLPFFTFHDRLAKIRKNEKEIALKYIFIDQSELPPRTYNCLKRSNIHTLLDLFNNSQEDLMKIEDFRIEDVKQILGILQKHFTVDLPKNKF.

An alpha N-terminal domain (alpha-NTD) region spans residues Met-1 to Gln-233. The tract at residues Ile-267 to Phe-337 is alpha C-terminal domain (alpha-CTD).

It belongs to the RNA polymerase alpha chain family. In terms of assembly, in plastids the minimal PEP RNA polymerase catalytic core is composed of four subunits: alpha, beta, beta', and beta''. When a (nuclear-encoded) sigma factor is associated with the core the holoenzyme is formed, which can initiate transcription.

The protein resides in the plastid. It localises to the chloroplast. The catalysed reaction is RNA(n) + a ribonucleoside 5'-triphosphate = RNA(n+1) + diphosphate. In terms of biological role, DNA-dependent RNA polymerase catalyzes the transcription of DNA into RNA using the four ribonucleoside triphosphates as substrates. This chain is DNA-directed RNA polymerase subunit alpha, found in Platanus occidentalis (Sycamore).